Here is a 456-residue protein sequence, read N- to C-terminus: Bifunctional protein GlmU (456 aa).

A pyrophosphorylase region spans residues 1–229 (MLNSAMSVVI…ISETDGVNNR (229 aa)). UDP-N-acetyl-alpha-D-glucosamine-binding positions include 11–14 (LAAG), lysine 25, glutamine 76, 81–82 (GT), 103–105 (YGD), glycine 140, glutamate 154, asparagine 169, and asparagine 227. A Mg(2+)-binding site is contributed by aspartate 105. Asparagine 227 contributes to the Mg(2+) binding site. The linker stretch occupies residues 230–250 (LQLSRLERIYQAEQAEKLLLS). The tract at residues 251–456 (GVMLRDPARF…QGWQRPVKKK (206 aa)) is N-acetyltransferase. UDP-N-acetyl-alpha-D-glucosamine is bound by residues arginine 333 and lysine 351. Histidine 363 acts as the Proton acceptor in catalysis. The UDP-N-acetyl-alpha-D-glucosamine site is built by tyrosine 366 and asparagine 377. Residues alanine 380, 386–387 (NY), serine 405, alanine 423, and arginine 440 contribute to the acetyl-CoA site.

It in the N-terminal section; belongs to the N-acetylglucosamine-1-phosphate uridyltransferase family. In the C-terminal section; belongs to the transferase hexapeptide repeat family. As to quaternary structure, homotrimer. Mg(2+) serves as cofactor.

The protein resides in the cytoplasm. The catalysed reaction is alpha-D-glucosamine 1-phosphate + acetyl-CoA = N-acetyl-alpha-D-glucosamine 1-phosphate + CoA + H(+). The enzyme catalyses N-acetyl-alpha-D-glucosamine 1-phosphate + UTP + H(+) = UDP-N-acetyl-alpha-D-glucosamine + diphosphate. The protein operates within nucleotide-sugar biosynthesis; UDP-N-acetyl-alpha-D-glucosamine biosynthesis; N-acetyl-alpha-D-glucosamine 1-phosphate from alpha-D-glucosamine 6-phosphate (route II): step 2/2. It participates in nucleotide-sugar biosynthesis; UDP-N-acetyl-alpha-D-glucosamine biosynthesis; UDP-N-acetyl-alpha-D-glucosamine from N-acetyl-alpha-D-glucosamine 1-phosphate: step 1/1. Its pathway is bacterial outer membrane biogenesis; LPS lipid A biosynthesis. In terms of biological role, catalyzes the last two sequential reactions in the de novo biosynthetic pathway for UDP-N-acetylglucosamine (UDP-GlcNAc). The C-terminal domain catalyzes the transfer of acetyl group from acetyl coenzyme A to glucosamine-1-phosphate (GlcN-1-P) to produce N-acetylglucosamine-1-phosphate (GlcNAc-1-P), which is converted into UDP-GlcNAc by the transfer of uridine 5-monophosphate (from uridine 5-triphosphate), a reaction catalyzed by the N-terminal domain. In Salmonella schwarzengrund (strain CVM19633), this protein is Bifunctional protein GlmU.